The following is a 67-amino-acid chain: Large ribosomal subunit protein bL35 (67 aa).

A compositionally biased stretch (basic residues) spans 1 to 16 (MPKMKTKSSAKKRFRV). A disordered region spans residues 1–24 (MPKMKTKSSAKKRFRVRPGGTVKR).

Belongs to the bacterial ribosomal protein bL35 family.

The chain is Large ribosomal subunit protein bL35 from Paracidovorax citrulli (strain AAC00-1) (Acidovorax citrulli).